The primary structure comprises 444 residues: Sprouty-related, EVH1 domain-containing protein 1 (444 aa).

The residue at position 2 (Ser2) is an N-acetylserine. The WH1 domain maps to 6–123 (ATSDNDNSYA…RGIRRAIEDI (118 aa)). Residues 123 to 151 (ISQGCPESKNEAEGADDLQANEEDSSSSL) are disordered. Over residues 135-147 (EGADDLQANEEDS) the composition is skewed to acidic residues. Lys224 is subject to N6-methyllysine. Positions 233 to 285 (SIRHVSFQDEDEIVRINPRDILIRRYADYRHPDMWKNDLERDDADSSIQFSKP) constitute a KBD domain. Residues Ser238 and Ser308 each carry the phosphoserine modification. The segment at 333–444 (SRCVYCQERF…CCGGKHKAAG (112 aa)) is required for interaction with TESK1. One can recognise an SPR domain in the interval 334–442 (RCVYCQERFN…CGCCGGKHKA (109 aa)).

As to quaternary structure, homodimer and heterodimer. Able to interact with SPRED2 to form heterodimers. Interacts (via C-terminus) with TAOK1/MARKK (via C-terminus); the interaction does not affect TAOK1 kinase activity. Interacts (via C-terminus) with TESK1 (via C-terminus); the interaction inhibits TESK1 kinase activity. Interacts with CAV1. Interacts with RAS. Interacts with palmitoyltransferase ZDHHC17/HIP14; the interaction leads to palmitoylation of SPRED1. In terms of processing, palmitoylated by ZDHHC17/HIP14. Post-translationally, phosphorylated on tyrosine. Ubiquitinated. As to expression, weakly expressed in embryonic cell line HEK293.

It is found in the cell membrane. The protein resides in the membrane. The protein localises to the caveola. Its subcellular location is the nucleus. Functionally, tyrosine kinase substrate that inhibits growth-factor-mediated activation of MAP kinase. Negatively regulates hematopoiesis of bone marrow. Inhibits fibroblast growth factor (FGF)-induced retinal lens fiber differentiation, probably by inhibiting FGF-mediated phosphorylation of ERK1/2. Attenuates actin stress fiber formation via inhibition of TESK1-mediated phosphorylation of cofilin. Inhibits TGFB-induced epithelial-to-mesenchymal transition in lens epithelial cells. This chain is Sprouty-related, EVH1 domain-containing protein 1 (SPRED1), found in Homo sapiens (Human).